The primary structure comprises 436 residues: Gamma-glutamyl phosphate reductase (436 aa).

The protein belongs to the gamma-glutamyl phosphate reductase family.

It localises to the cytoplasm. It carries out the reaction L-glutamate 5-semialdehyde + phosphate + NADP(+) = L-glutamyl 5-phosphate + NADPH + H(+). The protein operates within amino-acid biosynthesis; L-proline biosynthesis; L-glutamate 5-semialdehyde from L-glutamate: step 2/2. Catalyzes the NADPH-dependent reduction of L-glutamate 5-phosphate into L-glutamate 5-semialdehyde and phosphate. The product spontaneously undergoes cyclization to form 1-pyrroline-5-carboxylate. This Prochlorococcus marinus (strain SARG / CCMP1375 / SS120) protein is Gamma-glutamyl phosphate reductase.